Reading from the N-terminus, the 588-residue chain is Tannase (588 aa).

An N-terminal signal peptide occupies residues 1-18 (MRQHSRMAVAALAAGANA). Cystine bridges form between Cys25/Cys71, Cys194/Cys502, and Cys261/Cys278. The active-site Acyl-ester intermediate is the Ser195. The Ca(2+) site is built by Asp262, Asp265, Asp269, and Val271. Pyrrolidone carboxylic acid is present on Gln317. Catalysis depends on charge relay system residues Asp455 and His501.

The protein belongs to the tannase family. In terms of assembly, heterooctamer of 4 33 kDa and 4 30 kDa subunits linked by disulfide bond(s). Post-translationally, the protein is glycosylated to a carbohydrate content of 22.7%. The N-terminus of the 30 kDa subunit is blocked.

It catalyses the reaction digallate + H2O = 2 3,4,5-trihydroxybenzoate + H(+). Its function is as follows. Hydrolyzes ester bonds of tannic acid to produce gallic acid and glucose. The chain is Tannase from Aspergillus oryzae (strain ATCC 42149 / RIB 40) (Yellow koji mold).